Reading from the N-terminus, the 534-residue chain is Zinc finger protein 69 homolog B (534 aa).

Residues Lys37 and Lys40 each participate in a glycyl lysine isopeptide (Lys-Gly) (interchain with G-Cter in SUMO2) cross-link. In terms of domain architecture, KRAB spans 74 to 145 (LTFKDVSVDF…ERDISGVPSS (72 aa)). Residues Lys178 and Lys235 each participate in a glycyl lysine isopeptide (Lys-Gly) (interchain with G-Cter in SUMO2) cross-link. 9 C2H2-type zinc fingers span residues 279–301 (FECN…MRIH), 307–329 (FRCK…QRIH), 335–357 (YECK…VRIH), 363–385 (YECR…LRTH), 391–413 (FTCK…EIIH), 419–441 (YICN…QRTH), 447–469 (YKCK…QRVH), 475–497 (YECS…QRIH), and 503–525 (YDCN…CKTH).

This sequence belongs to the krueppel C2H2-type zinc-finger protein family.

It is found in the nucleus. Functionally, may be involved in transcriptional regulation. Essential for Golgi structural integrity. This is Zinc finger protein 69 homolog B (ZFP69B) from Homo sapiens (Human).